Here is a 273-residue protein sequence, read N- to C-terminus: Endoplasmic reticulum resident protein 27 (273 aa).

The signal sequence occupies residues 1-25 (MEAAPSRFMFLLFLLTCELAAEVAA). Residues 39 to 152 (EPTWLTDVPA…MVTEYNPVTV (114 aa)) form the Thioredoxin domain. Asparagine 100 carries N-linked (GlcNAc...) asparagine glycosylation. The segment at 230-233 (DEWD) is PDIA3-binding site. Positions 270–273 (KVEL) match the Prevents secretion from ER motif.

This sequence belongs to the protein disulfide isomerase family. In terms of assembly, interacts with PDIA3.

Its subcellular location is the endoplasmic reticulum lumen. In terms of biological role, specifically binds unfolded proteins and may recruit protein disulfide isomerase PDIA3 to unfolded substrates. Binds protein substrates via a hydrophobic pocket in the C-terminal domain. May play a role in the unfolded stress response. This is Endoplasmic reticulum resident protein 27 (ERP27) from Homo sapiens (Human).